The chain runs to 223 residues: Ribosome maturation factor RimM (223 aa).

Over residues 1–12 the composition is skewed to low complexity; that stretch reads MARRPGSSSRGP. Disordered regions lie at residues 1–44 and 204–223; these read MARR…DPGL and ADPP…DDPG. The region spanning 136-210 is the PRC barrel domain; sequence EDEFFLTDLI…KVVADPPDDL (75 aa).

It belongs to the RimM family. In terms of assembly, binds ribosomal protein uS19.

The protein localises to the cytoplasm. An accessory protein needed during the final step in the assembly of 30S ribosomal subunit, possibly for assembly of the head region. Essential for efficient processing of 16S rRNA. May be needed both before and after RbfA during the maturation of 16S rRNA. It has affinity for free ribosomal 30S subunits but not for 70S ribosomes. This Methylorubrum extorquens (strain PA1) (Methylobacterium extorquens) protein is Ribosome maturation factor RimM.